Reading from the N-terminus, the 262-residue chain is tRNA (guanine-N(1)-)-methyltransferase (262 aa).

S-adenosyl-L-methionine contacts are provided by residues Gly113 and 137 to 142; that span reads IGDYVL.

It belongs to the RNA methyltransferase TrmD family. Homodimer.

Its subcellular location is the cytoplasm. It catalyses the reaction guanosine(37) in tRNA + S-adenosyl-L-methionine = N(1)-methylguanosine(37) in tRNA + S-adenosyl-L-homocysteine + H(+). Functionally, specifically methylates guanosine-37 in various tRNAs. This is tRNA (guanine-N(1)-)-methyltransferase from Thermobifida fusca (strain YX).